Reading from the N-terminus, the 347-residue chain is UPF0284 protein SSO2213 (347 aa).

It belongs to the UPF0284 family.

The polypeptide is UPF0284 protein SSO2213 (Saccharolobus solfataricus (strain ATCC 35092 / DSM 1617 / JCM 11322 / P2) (Sulfolobus solfataricus)).